Reading from the N-terminus, the 140-residue chain is Large ribosomal subunit protein uL11 (140 aa).

The protein belongs to the universal ribosomal protein uL11 family. Part of the ribosomal stalk of the 50S ribosomal subunit. Interacts with L10 and the large rRNA to form the base of the stalk. L10 forms an elongated spine to which L12 dimers bind in a sequential fashion forming a multimeric L10(L12)X complex. One or more lysine residues are methylated.

Its function is as follows. Forms part of the ribosomal stalk which helps the ribosome interact with GTP-bound translation factors. The sequence is that of Large ribosomal subunit protein uL11 from Pelobacter propionicus (strain DSM 2379 / NBRC 103807 / OttBd1).